A 439-amino-acid polypeptide reads, in one-letter code: Serine hydroxymethyltransferase (439 aa).

The interval 1-20 (MNAPHRDETTASHRDDGFFT) is disordered. Residues Leu136 and 140-142 (GHL) contribute to the (6S)-5,6,7,8-tetrahydrofolate site. An N6-(pyridoxal phosphate)lysine modification is found at Lys245.

This sequence belongs to the SHMT family. In terms of assembly, homodimer. It depends on pyridoxal 5'-phosphate as a cofactor.

The protein localises to the cytoplasm. It carries out the reaction (6R)-5,10-methylene-5,6,7,8-tetrahydrofolate + glycine + H2O = (6S)-5,6,7,8-tetrahydrofolate + L-serine. It functions in the pathway one-carbon metabolism; tetrahydrofolate interconversion. Its pathway is amino-acid biosynthesis; glycine biosynthesis; glycine from L-serine: step 1/1. Its function is as follows. Catalyzes the reversible interconversion of serine and glycine with tetrahydrofolate (THF) serving as the one-carbon carrier. This reaction serves as the major source of one-carbon groups required for the biosynthesis of purines, thymidylate, methionine, and other important biomolecules. Also exhibits THF-independent aldolase activity toward beta-hydroxyamino acids, producing glycine and aldehydes, via a retro-aldol mechanism. The sequence is that of Serine hydroxymethyltransferase from Jannaschia sp. (strain CCS1).